A 402-amino-acid polypeptide reads, in one-letter code: Protein kinase US3 homolog (402 aa).

2 disordered regions span residues 1 to 21 (MSSS…KVHD) and 46 to 88 (FPDS…SPET). Residues 102–386 (YNIVSSLSPG…AQDILMLPLF (285 aa)) enclose the Protein kinase domain. ATP-binding positions include 108–116 (LSPGSEGYI) and lysine 129. The active-site Proton acceptor is aspartate 218.

It belongs to the protein kinase superfamily. Ser/Thr protein kinase family. In terms of processing, phosphorylated by UL13 homolog; this phosphorylation regulates subsequent phosphorylation of UL31 and UL34 homologs by US3. Autophosphorylated.

It is found in the host cytoplasm. The protein resides in the host nucleus. It carries out the reaction L-seryl-[protein] + ATP = O-phospho-L-seryl-[protein] + ADP + H(+). The enzyme catalyses L-threonyl-[protein] + ATP = O-phospho-L-threonyl-[protein] + ADP + H(+). Functionally, multifunctional serine/threonine kinase that plays a role in several processes including egress of virus particles from the nucleus, modulation of the actin cytoskeleton and inhibition of apoptosis. Phosphorylates UL31 and UL34 homologs, two critical regulators of capsid budding from nucleus to endoplasmic reticulum, thereby facilitating virion egress. Modulates and redistributes host components of the nuclear envelope, including LMNA, emerin/EMD and the nuclear matrix protein MATR3. Phosphorylates envelope glycoprotein B (gB), probably to direct it to the cell surface. Promotes virus intracellular spread by restructuring host cell cytoskeleton. Blocks host apoptosis to extend cell survival and allow efficient viral replication. Promotes viral gene expression by phosphorylating host HDAC2 to reduce viral genome silencing. The sequence is that of Protein kinase US3 homolog (MDV092) from Gallus gallus (Chicken).